Reading from the N-terminus, the 318-residue chain is Deoxyribose-phosphate aldolase (318 aa).

Aspartate 155 functions as the Proton donor/acceptor in the catalytic mechanism. Residue lysine 218 is the Schiff-base intermediate with acetaldehyde of the active site. The active-site Proton donor/acceptor is the lysine 254.

This sequence belongs to the DeoC/FbaB aldolase family. DeoC type 2 subfamily. Interacts with YBX1.

It is found in the cytoplasm. The protein localises to the cytoplasmic granule. Its subcellular location is the nucleus. It catalyses the reaction 2-deoxy-D-ribose 5-phosphate = D-glyceraldehyde 3-phosphate + acetaldehyde. It participates in carbohydrate degradation; 2-deoxy-D-ribose 1-phosphate degradation; D-glyceraldehyde 3-phosphate and acetaldehyde from 2-deoxy-alpha-D-ribose 1-phosphate: step 2/2. Catalyzes a reversible aldol reaction between acetaldehyde and D-glyceraldehyde 3-phosphate to generate 2-deoxy-D-ribose 5-phosphate. Participates in stress granule (SG) assembly. May allow ATP production from extracellular deoxyinosine in conditions of energy deprivation. This is Deoxyribose-phosphate aldolase (DERA) from Bos taurus (Bovine).